We begin with the raw amino-acid sequence, 439 residues long: Glutamate--tRNA ligase 2 (439 aa).

The short motif at 6–16 (PSPTGDMHIGN) is the 'HIGH' region element. The 'KMSKS' region motif lies at 232–236 (KMSKR). Lysine 235 is an ATP binding site.

Belongs to the class-I aminoacyl-tRNA synthetase family. Glutamate--tRNA ligase type 1 subfamily. In terms of assembly, monomer.

Its subcellular location is the cytoplasm. It catalyses the reaction tRNA(Glu) + L-glutamate + ATP = L-glutamyl-tRNA(Glu) + AMP + diphosphate. Its function is as follows. Catalyzes the attachment of glutamate to tRNA(Glu) in a two-step reaction: glutamate is first activated by ATP to form Glu-AMP and then transferred to the acceptor end of tRNA(Glu). The sequence is that of Glutamate--tRNA ligase 2 from Helicobacter pylori (strain P12).